A 210-amino-acid chain; its full sequence is Transcription factor ALC (210 aa).

The interval 1–49 is disordered; the sequence is MGDSDVGDRLPPPSSSDELSSFLRQILSRTPTAQPSSPPKSTNVSSAET. Polar residues predominate over residues 27–48; it reads LSRTPTAQPSSPPKSTNVSSAE. The bHLH domain maps to 93–142; the sequence is IDAQFHNLSEKKRRSKINEKMKALQKLIPNSNKTDKASMLDEAIEYLKQL.

As to quaternary structure, homodimer. Expressed constitutively in roots, leaves, stems, and flowers. Confined to the valve margins of the silique.

The protein localises to the nucleus. Required for the dehiscence of fruit, especially for the separation of the valve cells from the replum. Promotes the differentiation of a strip of labile nonlignified cells sandwiched between layers of lignified cells. The protein is Transcription factor ALC (ALC) of Arabidopsis thaliana (Mouse-ear cress).